We begin with the raw amino-acid sequence, 146 residues long: MFGTVFRILDEKNRIVMPPAFRNELEGDFYISANLEKILEIRSQTEFDLLAQKIGKANSLDPKLRDFARYFFGNTVKVSADKQGRFLIPKNLLDLATISKNLYLIGVNNKIEIWPEQRYEQFYAKFSDSEMTADLEKELLKSGVEL.

SpoVT-AbrB domains are found at residues 4–46 and 75–118; these read TVFR…SQTE and TVKV…PEQR.

The protein belongs to the MraZ family. In terms of assembly, forms oligomers.

The protein localises to the cytoplasm. It is found in the nucleoid. This chain is Transcriptional regulator MraZ, found in Mesomycoplasma hyopneumoniae (strain 232) (Mycoplasma hyopneumoniae).